The primary structure comprises 690 residues: Signal peptide peptidase-like 2C (690 aa).

An N-terminal signal peptide occupies residues 1–28 (MACLGSLHPLGSLLLLFLLLLLSPEARG). The Lumenal portion of the chain corresponds to 29 to 192 (EYGLVRVVSK…APLEPVTDYN (164 aa)). Residues 87–166 (DSSPRQRPLH…AVLRYTDMLD (80 aa)) enclose the PA domain. Asn-106 carries an N-linked (GlcNAc...) asparagine glycan. Residues 193-213 (MAIIFILAVGTVAAGGYWAGL) traverse the membrane as a helical segment. The Cytoplasmic segment spans residues 214-260 (MEANKLQRRQAQRGGGLGGHNQQQTVAAERSQRAWEDDDFEDAPMDF). Residues 261–283 (TPAMTGAVVTMSCSIMILLYFFY) traverse the membrane as a helical segment. Residue Asp-284 is a topological domain, lumenal. A helical membrane pass occupies residues 285-307 (CFVYVMIGIFSLGASTGLYSCLA). The Cytoplasmic segment spans residues 308 to 328 (PILCHLPLWRYQWVLPGQRVS). Residues 329–349 (VTWPLLLLAGLCAMVTVLWVI) form a helical membrane-spanning segment. The Lumenal portion of the chain corresponds to 350–354 (HRNED). A helical membrane pass occupies residues 355 to 373 (HWAWLLQDTLGVAYCLFVL). At 374 to 384 (RRVRLPTFKNC) the chain is on the cytoplasmic side. Residues 385 to 405 (TLFLLALLAFDVFFVFITPLF) traverse the membrane as a helical segment. Residue Asp-395 is part of the active site. Over 406-448 (TKTGESIMVEVASGPADSSSHERLPMVLKVPRLSFSALTLCNQ) the chain is Lumenal. The chain crosses the membrane as a helical span at residues 449 to 469 (PFSILGFGDIVVPGFLVAYCH). Asp-457 is an active-site residue. Over 470–482 (RFDMQVQSRQVYY) the chain is Cytoplasmic. The chain crosses the membrane as a helical span at residues 483 to 503 (MACTVAYAVGLLVTFVAMILM). Residue Gln-504 is a topological domain, lumenal. A helical transmembrane segment spans residues 505–525 (MGQPALLYLVSSTLLTSLAVA). Residues 508 to 510 (PAL) carry the PAL motif. Topologically, residues 526-690 (TCRQEFTLFW…KKSMSAQAPL (165 aa)) are cytoplasmic. Residues 564 to 573 (EDAKDSRTTN) show a composition bias toward basic and acidic residues. The interval 564–633 (EDAKDSRTTN…DPNELPSGSP (70 aa)) is disordered. Residues 615 to 624 (SEGWSDTNLD) show a composition bias toward polar residues.

It belongs to the peptidase A22B family. Interacts (via active sites) with FREY; the interaction stabilizes FREY1 protein and inhibits SPPL2C proteolytic activity. In terms of processing, glycosylated. As to expression, highly expressed in testis where it is primarily localised in spermatids (at protein level).

It is found in the endoplasmic reticulum membrane. Its function is as follows. Sperm-specific intramembrane-cleaving aspartic protease (I-CLiP) that cleaves distinct tail-anchored proteins and SNARE proteins. In elongated spermatids, modulates intracellular Ca(2+) homeostasis by controlling PLN abundance through proteolytic cleavage. During spermatogenesis, processes SNARE proteins and impacts vesicular trafficking which supports compartmental reorganization in maturating spermatids and may play a role in formation of the acrosome. In round spermatids, acts as a scaffold protein supporting FREY1 in IZUMO1 recruitment at the endoplasmic reticulum membrane and coordination of IZUMO1 complex assembly. Stabilizes FREY1 at the endoplasmic reticulum membrane through interaction. May recruit IZUMO1 interaction partners. Functionally, no difference in cleavage specificity compared to isoform 1. This Mus musculus (Mouse) protein is Signal peptide peptidase-like 2C.